Consider the following 304-residue polypeptide: KIN17-like protein (304 aa).

The C2H2-type zinc finger occupies W26–H50. 2 disordered regions span residues I204 to N228 and L261 to A291.

It belongs to the KIN17 family.

Its subcellular location is the nucleus. The protein resides in the nucleolus. This is KIN17-like protein from Schizosaccharomyces pombe (strain 972 / ATCC 24843) (Fission yeast).